The sequence spans 224 residues: N-(5'-phosphoribosyl)anthranilate isomerase (224 aa).

This sequence belongs to the TrpF family.

It carries out the reaction N-(5-phospho-beta-D-ribosyl)anthranilate = 1-(2-carboxyphenylamino)-1-deoxy-D-ribulose 5-phosphate. Its pathway is amino-acid biosynthesis; L-tryptophan biosynthesis; L-tryptophan from chorismate: step 3/5. This chain is N-(5'-phosphoribosyl)anthranilate isomerase, found in Allorhizobium ampelinum (strain ATCC BAA-846 / DSM 112012 / S4) (Agrobacterium vitis (strain S4)).